A 148-amino-acid polypeptide reads, in one-letter code: UPF0540 protein At1g62000 (148 aa).

The N-terminal stretch at Met-1 to Ala-21 is a signal peptide. Low complexity predominate over residues Arg-123–Ser-132. Positions Arg-123–Asp-148 are disordered.

It belongs to the UPF0540 family.

In Arabidopsis thaliana (Mouse-ear cress), this protein is UPF0540 protein At1g62000.